The sequence spans 140 residues: Baculoviral IAP repeat-containing protein 5 (140 aa).

The stretch at 18-88 (RIATFKNWPF…KHSPGCAFLT (71 aa)) is one BIR repeat. At lysine 23 the chain carries N6-acetyllysine. Residue threonine 34 is modified to Phosphothreonine; by CDK1 and CDK15. Threonine 48 carries the phosphothreonine modification. Residues cysteine 57, cysteine 60, glutamate 76, histidine 77, histidine 80, and cysteine 84 each coordinate Zn(2+). Residues lysine 90, lysine 110, lysine 112, and lysine 115 each carry the N6-acetyllysine modification. Residues 113–129 (IAKETNNKQKEFEETAK) are compositionally biased toward basic and acidic residues. The tract at residues 113-140 (IAKETNNKQKEFEETAKTTRQSIEQLAA) is disordered. Phosphothreonine; by AURKB is present on threonine 117. At lysine 129 the chain carries N6-acetyllysine. The span at 130–140 (TTRQSIEQLAA) shows a compositional bias: polar residues.

The protein belongs to the IAP family. In terms of assembly, monomer or homodimer. Exists as a homodimer in the apo state and as a monomer in the CPC-bound state. The monomer protects cells against apoptosis more efficiently than the dimer. Only the dimeric form is capable of enhancing tubulin stability in cells. When phosphorylated, interacts with LAMTOR5/HBXIP; the resulting complex binds pro-CASP9, as well as active CASP9, but much less efficiently. Component of the chromosomal passenger complex (CPC) composed of at least BIRC5/survivin, CDCA8/borealin, INCENP, AURKB or AURKC; in the complex forms a triple-helix bundle-based subcomplex with INCENP and CDCA8. Interacts with JTB. Interacts (via BIR domain) with histone H3 phosphorylated at 'Thr-3' (H3pT3). Interacts with EVI5. Interacts with GTP-bound RAN in both the S and M phases of the cell cycle. Interacts with USP9X. Interacts with tubulin. Interacts with BIRC2/c-IAP1. The acetylated form at Lys-129 interacts with STAT3. The monomeric form deacetylated at Lys-129 interacts with XPO1/CRM1. The monomeric form interacts with XIAP/BIRC4. Both the dimeric and monomeric form can interact with DIABLO/SMAC. Interacts with BIRC6/bruce. Interacts with FBXL7; this interaction facilitates the polyubiquitination and subsequent proteasomal degradation of BIRC5 by the SCF(FBXL7) E3 ubiquitin-protein ligase complex. In terms of processing, ubiquitinated by the Cul9-RING ubiquitin-protein ligase complex, leading to its degradation. Ubiquitination is required for centrosomal targeting. Deubiquitinated by USP35 or USP38; leading to stabilization. Acetylation at Lys-129 results in its homodimerization, while deacetylation promotes the formation of monomers which heterodimerize with XPO1/CRM1 which facilitates its nuclear export. The acetylated form represses STAT3 transactivation. The dynamic equilibrium between its acetylation and deacetylation at Lys-129 determines its interaction with XPO1/CRM1, its subsequent subcellular localization, and its ability to inhibit STAT3 transactivation. Post-translationally, in vitro phosphorylation at Thr-117 by AURKB prevents interaction with INCENP and localization to mitotic chromosomes. Phosphorylation at Thr-48 by CK2 is critical for its mitotic and anti-apoptotic activities. Phosphorylation at Thr-34 by CDK15 is critical for its anti-apoptotic activity.

The protein resides in the cytoplasm. Its subcellular location is the nucleus. It is found in the chromosome. It localises to the centromere. The protein localises to the cytoskeleton. The protein resides in the spindle. Its subcellular location is the kinetochore. It is found in the midbody. Multitasking protein that has dual roles in promoting cell proliferation and preventing apoptosis. Component of a chromosome passage protein complex (CPC) which is essential for chromosome alignment and segregation during mitosis and cytokinesis. Acts as an important regulator of the localization of this complex; directs CPC movement to different locations from the inner centromere during prometaphase to midbody during cytokinesis and participates in the organization of the center spindle by associating with polymerized microtubules. Involved in the recruitment of CPC to centromeres during early mitosis via association with histone H3 phosphorylated at 'Thr-3' (H3pT3) during mitosis. The complex with RAN plays a role in mitotic spindle formation by serving as a physical scaffold to help deliver the RAN effector molecule TPX2 to microtubules. May counteract a default induction of apoptosis in G2/M phase. The acetylated form represses STAT3 transactivation of target gene promoters. May play a role in neoplasia. Inhibitor of CASP3 and CASP7. Essential for the maintenance of mitochondrial integrity and function. This is Baculoviral IAP repeat-containing protein 5 (Birc5) from Mus musculus (Mouse).